Reading from the N-terminus, the 464-residue chain is Hydrogen cyanide synthase subunit HcnB (464 aa).

In terms of assembly, heterotrimer of HcnA, HcnB and HcnC.

It is found in the cell membrane. It carries out the reaction glycine + 2 A = hydrogen cyanide + 2 AH2 + CO2. Its activity is regulated as follows. Oxygen is necessary for cyanogenesis. Activated by succinate, glycine methyl ester, glucose and D,L-methionine in addition to glycine. Phenazine methosulfate, methylene blue, 2,6-dichlorophenolindophenol (DCIP) and ferricyanide can replace oxygen for the reaction. Inhibited by pyrrolnitrin and acriflavine at 1 mM concentration. Its function is as follows. A three-component membrane-bound flavoenzyme that catalyzes the formation of hydrogen cyanide, a secondary metabolite, by transfer of electrons to a cyanide-resistant branch of the aerobic respiratory chain. The sequence is that of Hydrogen cyanide synthase subunit HcnB from Pseudomonas aeruginosa (strain ATCC 15692 / DSM 22644 / CIP 104116 / JCM 14847 / LMG 12228 / 1C / PRS 101 / PAO1).